A 419-amino-acid chain; its full sequence is Gamma-glutamyl phosphate reductase (419 aa).

It belongs to the gamma-glutamyl phosphate reductase family.

It is found in the cytoplasm. The enzyme catalyses L-glutamate 5-semialdehyde + phosphate + NADP(+) = L-glutamyl 5-phosphate + NADPH + H(+). The protein operates within amino-acid biosynthesis; L-proline biosynthesis; L-glutamate 5-semialdehyde from L-glutamate: step 2/2. Its function is as follows. Catalyzes the NADPH-dependent reduction of L-glutamate 5-phosphate into L-glutamate 5-semialdehyde and phosphate. The product spontaneously undergoes cyclization to form 1-pyrroline-5-carboxylate. The sequence is that of Gamma-glutamyl phosphate reductase from Azobacteroides pseudotrichonymphae genomovar. CFP2.